A 305-amino-acid chain; its full sequence is tRNA N6-adenosine threonylcarbamoyltransferase (305 aa).

The Fe cation site is built by His108 and His112. Substrate is bound by residues 130–134, Asp163, Gly176, Asp180, and Asn264; that span reads VVSGG. Asp288 provides a ligand contact to Fe cation.

Belongs to the KAE1 / TsaD family. Requires Fe(2+) as cofactor.

The protein resides in the cytoplasm. The catalysed reaction is L-threonylcarbamoyladenylate + adenosine(37) in tRNA = N(6)-L-threonylcarbamoyladenosine(37) in tRNA + AMP + H(+). Required for the formation of a threonylcarbamoyl group on adenosine at position 37 (t(6)A37) in tRNAs that read codons beginning with adenine. Is involved in the transfer of the threonylcarbamoyl moiety of threonylcarbamoyl-AMP (TC-AMP) to the N6 group of A37, together with TsaE and TsaB. TsaD likely plays a direct catalytic role in this reaction. The polypeptide is tRNA N6-adenosine threonylcarbamoyltransferase (Mycoplasma mobile (strain ATCC 43663 / 163K / NCTC 11711) (Mesomycoplasma mobile)).